A 604-amino-acid polypeptide reads, in one-letter code: UvrABC system protein C (604 aa).

The GIY-YIG domain maps to 14-91 (ESPGVYRMLD…IKEQRPPYNI (78 aa)). Residues 202 to 237 (EQVTAQLTRDMETASQALDFEEAARLRDQIQQLRRL) form the UVR domain. The interval 538-557 (GHRQQRDKQRRTSTLQDIPG) is disordered.

The protein belongs to the UvrC family. Interacts with UvrB in an incision complex.

It is found in the cytoplasm. Its function is as follows. The UvrABC repair system catalyzes the recognition and processing of DNA lesions. UvrC both incises the 5' and 3' sides of the lesion. The N-terminal half is responsible for the 3' incision and the C-terminal half is responsible for the 5' incision. The sequence is that of UvrABC system protein C from Chromohalobacter salexigens (strain ATCC BAA-138 / DSM 3043 / CIP 106854 / NCIMB 13768 / 1H11).